Here is a 175-residue protein sequence, read N- to C-terminus: Large ribosomal subunit protein uL10 (175 aa).

This sequence belongs to the universal ribosomal protein uL10 family. In terms of assembly, part of the ribosomal stalk of the 50S ribosomal subunit. The N-terminus interacts with L11 and the large rRNA to form the base of the stalk. The C-terminus forms an elongated spine to which L12 dimers bind in a sequential fashion forming a multimeric L10(L12)X complex.

Forms part of the ribosomal stalk, playing a central role in the interaction of the ribosome with GTP-bound translation factors. The chain is Large ribosomal subunit protein uL10 from Prochlorococcus marinus (strain MIT 9301).